We begin with the raw amino-acid sequence, 593 residues long: MTAVAWPYANGPRHIGHVSGFGVPSDVFSRYQRMAGNRVLMVSGTDEHGTPISVQADKEGLSTRELADKYNRVITEDLQGLGLSYDLFTRTTTGNHYEVVQQIFLALHRNGYIIPKTTTGAISPSTGRTLPDRYIEGTCPICGYDGARGDQCDNCGNQLDPAELINPVSRINGEKPDFVETEHLFLDLSAFTESLGKWLSTRTGWRSNVLKFTQNLVEDMRPRAISRDLDWGVPIPLDGWRDQSMKRLYVWFDAVIGYFSASVEWARRTGDPDAWKQFWTDPSAQGYYFMGKDNITFHAQIWPALLMGHNGQGDKGGEVGPYGQLNLPDEIVSSEFLTMSGSKFSTSRGTVIYVRDFLREFGPDTLRYFISVAGPENQDTDFTWDEFVRRVNFELANEWGNLVNRSVSMAAKNNGAVPAPTSPRAADEELKTLSRNAFETVGGHLQRSRFKAAAQEAMRVVSAANKYLSDQEPWKLKEDPDRRDAVLHTALQVVSDANTLLTPFLPHSAQKVHELLGGTGVWSAQPELREVSDLDVPEREYPVLMGDYAAEQASWESTEIEVGRPLHKPTPLFAKLDAALGETGPEWAPIEKS.

The short motif at 7 to 17 (PYANGPRHIGH) is the 'HIGH' region element. Positions 139, 142, 152, and 155 each coordinate Zn(2+). The 'KMSKS' region signature appears at 343-347 (KFSTS). Residue Thr-346 coordinates ATP.

The protein belongs to the class-I aminoacyl-tRNA synthetase family. MetG type 1 subfamily. In terms of assembly, monomer. The cofactor is Zn(2+).

Its subcellular location is the cytoplasm. It carries out the reaction tRNA(Met) + L-methionine + ATP = L-methionyl-tRNA(Met) + AMP + diphosphate. In terms of biological role, is required not only for elongation of protein synthesis but also for the initiation of all mRNA translation through initiator tRNA(fMet) aminoacylation. In Saccharopolyspora erythraea (strain ATCC 11635 / DSM 40517 / JCM 4748 / NBRC 13426 / NCIMB 8594 / NRRL 2338), this protein is Methionine--tRNA ligase.